The sequence spans 165 residues: ATP synthase subunit b (165 aa).

Residues 5-25 (LVGITWEFVFQIVNTFIIFLL) form a helical membrane-spanning segment.

This sequence belongs to the ATPase B chain family. In terms of assembly, F-type ATPases have 2 components, F(1) - the catalytic core - and F(0) - the membrane proton channel. F(1) has five subunits: alpha(3), beta(3), gamma(1), delta(1), epsilon(1). F(0) has three main subunits: a(1), b(2) and c(10-14). The alpha and beta chains form an alternating ring which encloses part of the gamma chain. F(1) is attached to F(0) by a central stalk formed by the gamma and epsilon chains, while a peripheral stalk is formed by the delta and b chains.

The protein localises to the cell membrane. F(1)F(0) ATP synthase produces ATP from ADP in the presence of a proton or sodium gradient. F-type ATPases consist of two structural domains, F(1) containing the extramembraneous catalytic core and F(0) containing the membrane proton channel, linked together by a central stalk and a peripheral stalk. During catalysis, ATP synthesis in the catalytic domain of F(1) is coupled via a rotary mechanism of the central stalk subunits to proton translocation. Its function is as follows. Component of the F(0) channel, it forms part of the peripheral stalk, linking F(1) to F(0). This chain is ATP synthase subunit b, found in Clostridioides difficile (strain 630) (Peptoclostridium difficile).